The sequence spans 376 residues: Alcohol dehydrogenase 1 (376 aa).

Position 2 is an N-acetylserine (S2). Residues C47, H68, C98, C101, C104, C112, and C176 each coordinate Zn(2+). NAD(+)-binding positions include 201–206, D225, K230, 294–296, and R371; these read GLGGVG and VGV.

It belongs to the zinc-containing alcohol dehydrogenase family. Class-I subfamily. In terms of assembly, homodimer. Requires Zn(2+) as cofactor.

Its subcellular location is the cytoplasm. It carries out the reaction a primary alcohol + NAD(+) = an aldehyde + NADH + H(+). The catalysed reaction is a secondary alcohol + NAD(+) = a ketone + NADH + H(+). The sequence is that of Alcohol dehydrogenase 1 (ADH1) from Gallus gallus (Chicken).